A 380-amino-acid chain; its full sequence is 1-deoxy-D-xylulose 5-phosphate reductoisomerase (380 aa).

Residues Thr9, Gly10, Ser11, Val12, Arg36, and Asn117 each coordinate NADPH. Lys118 contributes to the 1-deoxy-D-xylulose 5-phosphate binding site. NADPH is bound at residue Glu119. A Mn(2+)-binding site is contributed by Asp139. Ser140, Glu141, Ser165, and His188 together coordinate 1-deoxy-D-xylulose 5-phosphate. Glu141 serves as a coordination point for Mn(2+). Gly194 contacts NADPH. Positions 201, 206, 207, and 210 each coordinate 1-deoxy-D-xylulose 5-phosphate. Glu210 serves as a coordination point for Mn(2+).

Belongs to the DXR family. It depends on Mg(2+) as a cofactor. Mn(2+) serves as cofactor.

It carries out the reaction 2-C-methyl-D-erythritol 4-phosphate + NADP(+) = 1-deoxy-D-xylulose 5-phosphate + NADPH + H(+). The protein operates within isoprenoid biosynthesis; isopentenyl diphosphate biosynthesis via DXP pathway; isopentenyl diphosphate from 1-deoxy-D-xylulose 5-phosphate: step 1/6. Its function is as follows. Catalyzes the NADPH-dependent rearrangement and reduction of 1-deoxy-D-xylulose-5-phosphate (DXP) to 2-C-methyl-D-erythritol 4-phosphate (MEP). The protein is 1-deoxy-D-xylulose 5-phosphate reductoisomerase of Aquifex aeolicus (strain VF5).